The sequence spans 189 residues: Peptidyl-tRNA hydrolase (189 aa).

Residue Tyr15 coordinates tRNA. His20 serves as the catalytic Proton acceptor. TRNA is bound by residues Phe66, Asn68, and Asn114.

Belongs to the PTH family. As to quaternary structure, monomer.

The protein resides in the cytoplasm. The catalysed reaction is an N-acyl-L-alpha-aminoacyl-tRNA + H2O = an N-acyl-L-amino acid + a tRNA + H(+). Functionally, hydrolyzes ribosome-free peptidyl-tRNAs (with 1 or more amino acids incorporated), which drop off the ribosome during protein synthesis, or as a result of ribosome stalling. Its function is as follows. Catalyzes the release of premature peptidyl moieties from peptidyl-tRNA molecules trapped in stalled 50S ribosomal subunits, and thus maintains levels of free tRNAs and 50S ribosomes. In Streptococcus gordonii (strain Challis / ATCC 35105 / BCRC 15272 / CH1 / DL1 / V288), this protein is Peptidyl-tRNA hydrolase.